The sequence spans 305 residues: Glycine--tRNA ligase alpha subunit (305 aa).

It belongs to the class-II aminoacyl-tRNA synthetase family. Tetramer of two alpha and two beta subunits.

It localises to the cytoplasm. The enzyme catalyses tRNA(Gly) + glycine + ATP = glycyl-tRNA(Gly) + AMP + diphosphate. The sequence is that of Glycine--tRNA ligase alpha subunit from Janthinobacterium sp. (strain Marseille) (Minibacterium massiliensis).